The sequence spans 206 residues: Small ribosomal subunit protein uS4 (206 aa).

An S4 RNA-binding domain is found at 98–155; sequence TRLDNVVYRLGWALSRDQARQLVSHGKIAVNGKRVNIPSYNLKPGDVVELLDKDLIPV.

The protein belongs to the universal ribosomal protein uS4 family. As to quaternary structure, part of the 30S ribosomal subunit. Contacts protein S5. The interaction surface between S4 and S5 is involved in control of translational fidelity.

Its function is as follows. One of the primary rRNA binding proteins, it binds directly to 16S rRNA where it nucleates assembly of the body of the 30S subunit. In terms of biological role, with S5 and S12 plays an important role in translational accuracy. The polypeptide is Small ribosomal subunit protein uS4 (Dictyoglomus thermophilum (strain ATCC 35947 / DSM 3960 / H-6-12)).